The primary structure comprises 597 residues: MHRYRTHTCGDLREAQADETTRLSGWCHRIRDHGGVLFIDLRDHYGITQCVVDPDSKAFPLAEKLRSEWVVRIDGLVRKRPSGTENPEMPTGFIEIYVTEIEVLGAAAELPMPVFGDIDYPEDIRLKYRFLDLRREKLHKNIMLRGQVIDSLRRRMKEQGFFEFQTPILTASSPEGARDFLVPSRIHAGKFYALPQAPQQYKQLLMMAGFDRYFQIAPCFRDEDPRADRLPGEFYQLDVEMSFITQEDVFAAMEPVIRGAFEEFGNGQPVTQTFPRIPYAEAMLKYGSDKPDLRNPLVIADVTDLFARDDVSFNAFKNVIKKGGVVRAIPATGAASQPRSFFDKLNDWAKSEGAAGLGYVIFEGSDEAPVGKGPIAKFLPAEVQAAIVTRADLKAGDAVFFACDIEEKAAKLAGAARLRIGHELGLSKTGVFELCWIVDFPMYEWNEDDKTVDFSHNPFSMPQGGLEALQTQDPLTIKAFQYDIACNGYEIASGGIRNHRPEAMVKAFEIAGYGEETVVERFGGMYRAFQYGAPPHGGMAAGVDRIIMLLAGVQNLREISLFPMNQKAEDLLMGAPSEATTKQLRELHIRLNLPEPK.

E175 lines the L-aspartate pocket. The interval 199 to 202 is aspartate; the sequence is QQYK. L-aspartate contacts are provided by R221 and H456. 221–223 contacts ATP; the sequence is RDE. Residue E490 participates in ATP binding. Residue R497 coordinates L-aspartate. 542 to 545 lines the ATP pocket; it reads GVDR.

It belongs to the class-II aminoacyl-tRNA synthetase family. Type 1 subfamily. As to quaternary structure, homodimer.

Its subcellular location is the cytoplasm. The catalysed reaction is tRNA(Asx) + L-aspartate + ATP = L-aspartyl-tRNA(Asx) + AMP + diphosphate. Aspartyl-tRNA synthetase with relaxed tRNA specificity since it is able to aspartylate not only its cognate tRNA(Asp) but also tRNA(Asn). Reaction proceeds in two steps: L-aspartate is first activated by ATP to form Asp-AMP and then transferred to the acceptor end of tRNA(Asp/Asn). In Beijerinckia indica subsp. indica (strain ATCC 9039 / DSM 1715 / NCIMB 8712), this protein is Aspartate--tRNA(Asp/Asn) ligase.